The chain runs to 977 residues: Kinesin-like protein KIN-14D (977 aa).

Low complexity predominate over residues 1–13 (MSSSNNAAAAAAS). The interval 1-20 (MSSSNNAAAAAASPDPSRRR) is disordered. The region spanning 17 to 118 (SRRREDVVGW…CILALKDRFG (102 aa)) is the Calponin-homology (CH) domain. Residues 297-384 (KAEETQRIED…TKRRIELEEL (88 aa)) are a coiled coil. The Kinesin motor domain occupies 472–800 (NIRVYCRIRP…LKFAERVSGV (329 aa)). 556–563 (GQTGSGKT) serves as a coordination point for ATP. Positions 812-847 (KEGKDVKELMDQLSLLKDTISKKDEEIDRLQLLNSS) form a coiled coil. Residues 852–977 (PTRQADSVLK…RNNSTLKRGP (126 aa)) are disordered. 2 stretches are compositionally biased toward polar residues: residues 861–879 (KHSS…TSVG) and 956–977 (RKSS…KRGP).

The protein belongs to the TRAFAC class myosin-kinesin ATPase superfamily. Kinesin family. KIN-14 subfamily.

This Oryza sativa subsp. japonica (Rice) protein is Kinesin-like protein KIN-14D.